The sequence spans 232 residues: tRNA pseudouridine synthase B (232 aa).

The active-site Nucleophile is D53.

Belongs to the pseudouridine synthase TruB family. Type 1 subfamily.

It catalyses the reaction uridine(55) in tRNA = pseudouridine(55) in tRNA. Responsible for synthesis of pseudouridine from uracil-55 in the psi GC loop of transfer RNAs. In Malacoplasma penetrans (strain HF-2) (Mycoplasma penetrans), this protein is tRNA pseudouridine synthase B.